Reading from the N-terminus, the 528-residue chain is Cytochrome P450 monooxygenase ppsD (528 aa).

The helical transmembrane segment at 2–21 (LVLVSLVLCLTGFCLLQWAL) threads the bilayer. Asn137 carries N-linked (GlcNAc...) asparagine glycosylation. Cys441 contributes to the heme binding site. N-linked (GlcNAc...) asparagine glycans are attached at residues Asn450 and Asn463.

Belongs to the cytochrome P450 family. Heme is required as a cofactor.

The protein localises to the membrane. Its function is as follows. Cytochrome P450 monooxygenase; part of the gene cluster that mediates the biosynthesis of 2,4'-dihydroxy-3'-methoxypropiophenone. The first step of the pathway is the conversion of acetate into acetyl-CoA by the acyl-CoA ligase ppsA. Acetyl-CoA is then used as a starter unit by the polyketide synthase ppsB and condensed with 4 malonyl-CoA unit to produce the pentaketide backbone. During polyketide extension, the polykedite chain is probably reduced and dehydrated by the KR and PT domains, respectively. O-methylation seems to be catalyzed by an unknown methyltransferase rather than by the CMeT domain of ppsB. Two hydroxylations and one further decarboxylation step catalyzed by yet unknown enzymes are then required to yield 4'-hydroxy-3'-methoxypropiophenone. PpsC functions as a carrier protein to transport 4'-hydroxy-3'-methoxypropiophenone to a specific cell compartment in which 4'-hydroxy-3'-methoxypropiophenone is hydroxylated to 2,4'-dihydroxy-3'-methoxypropiophenone by a still to be identified enzyme. This chain is Cytochrome P450 monooxygenase ppsD, found in Aspergillus oryzae (strain ATCC 42149 / RIB 40) (Yellow koji mold).